We begin with the raw amino-acid sequence, 598 residues long: Peroxisomal multifunctional enzyme type 2 (598 aa).

Positions 1–309 are (3R)-hydroxyacyl-CoA dehydrogenase; it reads MSSSDGKLRY…LEVLEKLKEG (309 aa). Residues 16 to 40, leucine 24, aspartate 43, 78 to 79, and asparagine 102 each bind NAD(+); these read VVTG…AKVV and SV. Serine 154 is a binding site for substrate. The active-site Proton acceptor is tyrosine 167. Residues 167–171 and 199–202 each bind NAD(+); these read YTAAK and AASR. The enoyl-CoA hydratase 2 stretch occupies residues 310–598; that stretch reads GGDAIEDAFE…VDLKSSQAKL (289 aa). (3R)-3-hydroxydecanoyl-CoA contacts are provided by residues 390–391, lysine 419, 496–501, glycine 519, and phenylalanine 549; these read HG and DKNPLH. Residues 469–586 form the MaoC-like domain; that stretch reads PAPNRQPDAT…VETGKEVISG (118 aa). The Microbody targeting signal motif lies at 596-598; sequence AKL.

Belongs to the short-chain dehydrogenases/reductases (SDR) family. In terms of assembly, homodimer.

It localises to the peroxisome. The catalysed reaction is a (3R)-3-hydroxyacyl-CoA + NAD(+) = a 3-oxoacyl-CoA + NADH + H(+). The enzyme catalyses a (3R)-3-hydroxyacyl-CoA = a (2E)-enoyl-CoA + H2O. It participates in lipid metabolism; fatty acid beta-oxidation. In terms of biological role, bifunctional enzyme acting on the peroxisomal beta-oxidation pathway for fatty acids. This chain is Peroxisomal multifunctional enzyme type 2, found in Drosophila melanogaster (Fruit fly).